Reading from the N-terminus, the 193-residue chain is MTPLALIMIIIAYLLGSISSAVLICRLRGLPDPRTSGSQNPGATNVFRLGGKGAAGLVLLCDILKGMLPVWGGYFLESNPLLLGIIAIAACLGHMYPLFFHFKGGKGVATALGALAPIGLDLTGLLFGTWVVIVLITGYSSLASMATALLAPLFTWLVKPQYTLPVAMLSCLIVLKHHENIRRFFAGKEKKIW.

5 helical membrane passes run 4 to 24, 56 to 76, 80 to 100, 116 to 136, and 152 to 174; these read LALI…AVLI, GLVL…GYFL, PLLL…PLFF, APIG…IVLI, and PLFT…CLIV.

The protein belongs to the PlsY family. Probably interacts with PlsX.

Its subcellular location is the cell inner membrane. The enzyme catalyses an acyl phosphate + sn-glycerol 3-phosphate = a 1-acyl-sn-glycero-3-phosphate + phosphate. It participates in lipid metabolism; phospholipid metabolism. Its function is as follows. Catalyzes the transfer of an acyl group from acyl-phosphate (acyl-PO(4)) to glycerol-3-phosphate (G3P) to form lysophosphatidic acid (LPA). This enzyme utilizes acyl-phosphate as fatty acyl donor, but not acyl-CoA or acyl-ACP. The sequence is that of Glycerol-3-phosphate acyltransferase from Aliivibrio salmonicida (strain LFI1238) (Vibrio salmonicida (strain LFI1238)).